Consider the following 154-residue polypeptide: Transcriptional repressor NrdR (154 aa).

The segment at 3-34 (CPFCGNDETKVLESRQVEEGTAVRRRRECERC) is a zinc-finger region. One can recognise an ATP-cone domain in the interval 49-139 (LIVVKKDGRR…VYREFKDVQR (91 aa)).

The protein belongs to the NrdR family. It depends on Zn(2+) as a cofactor.

In terms of biological role, negatively regulates transcription of bacterial ribonucleotide reductase nrd genes and operons by binding to NrdR-boxes. In Desulfitobacterium hafniense (strain DSM 10664 / DCB-2), this protein is Transcriptional repressor NrdR.